The following is a 486-amino-acid chain: Protein nucleotidyltransferase YdiU (486 aa).

ATP contacts are provided by Gly90, Gly92, Arg93, Lys113, Asp125, Gly126, Arg176, and Arg183. The Proton acceptor role is filled by Asp252. Asn253 and Asp262 together coordinate Mg(2+). Asp262 provides a ligand contact to ATP.

Belongs to the SELO family. Requires Mg(2+) as cofactor. Mn(2+) is required as a cofactor.

It carries out the reaction L-seryl-[protein] + ATP = 3-O-(5'-adenylyl)-L-seryl-[protein] + diphosphate. It catalyses the reaction L-threonyl-[protein] + ATP = 3-O-(5'-adenylyl)-L-threonyl-[protein] + diphosphate. The catalysed reaction is L-tyrosyl-[protein] + ATP = O-(5'-adenylyl)-L-tyrosyl-[protein] + diphosphate. The enzyme catalyses L-histidyl-[protein] + UTP = N(tele)-(5'-uridylyl)-L-histidyl-[protein] + diphosphate. It carries out the reaction L-seryl-[protein] + UTP = O-(5'-uridylyl)-L-seryl-[protein] + diphosphate. It catalyses the reaction L-tyrosyl-[protein] + UTP = O-(5'-uridylyl)-L-tyrosyl-[protein] + diphosphate. Functionally, nucleotidyltransferase involved in the post-translational modification of proteins. It can catalyze the addition of adenosine monophosphate (AMP) or uridine monophosphate (UMP) to a protein, resulting in modifications known as AMPylation and UMPylation. In Pseudomonas aeruginosa (strain LESB58), this protein is Protein nucleotidyltransferase YdiU.